The following is a 121-amino-acid chain: Lysozyme (121 aa).

Positions 1 to 121 (KTFTRCELVQ…NKPLPDISKC (121 aa)) constitute a C-type lysozyme domain. Disulfide bonds link Cys6–Cys121, Cys27–Cys110, Cys62–Cys76, and Cys72–Cys90. Residues Glu32 and Asp50 contribute to the active site.

The protein belongs to the glycosyl hydrolase 22 family.

The enzyme catalyses Hydrolysis of (1-&gt;4)-beta-linkages between N-acetylmuramic acid and N-acetyl-D-glucosamine residues in a peptidoglycan and between N-acetyl-D-glucosamine residues in chitodextrins.. Its function is as follows. Lysozymes have primarily a bacteriolytic function; those in tissues and body fluids are associated with the monocyte-macrophage system and enhance the activity of immunoagents. In Galleria mellonella (Greater wax moth), this protein is Lysozyme.